A 121-amino-acid chain; its full sequence is Ribosome-binding factor A (121 aa).

It belongs to the RbfA family. As to quaternary structure, monomer. Binds 30S ribosomal subunits, but not 50S ribosomal subunits or 70S ribosomes.

It localises to the cytoplasm. Its function is as follows. One of several proteins that assist in the late maturation steps of the functional core of the 30S ribosomal subunit. Associates with free 30S ribosomal subunits (but not with 30S subunits that are part of 70S ribosomes or polysomes). Required for efficient processing of 16S rRNA. May interact with the 5'-terminal helix region of 16S rRNA. The polypeptide is Ribosome-binding factor A (Finegoldia magna (strain ATCC 29328 / DSM 20472 / WAL 2508) (Peptostreptococcus magnus)).